The primary structure comprises 2430 residues: DNA-directed RNA polymerase subunit beta'' (2430 aa).

4 residues coordinate Zn(2+): Cys-336, Cys-455, Cys-462, and Cys-465.

It belongs to the RNA polymerase beta' chain family. RpoC2 subfamily. In plastids the minimal PEP RNA polymerase catalytic core is composed of four subunits: alpha, beta, beta', and beta''. When a (nuclear-encoded) sigma factor is associated with the core the holoenzyme is formed, which can initiate transcription. Zn(2+) serves as cofactor.

The protein resides in the plastid. It is found in the chloroplast. The catalysed reaction is RNA(n) + a ribonucleoside 5'-triphosphate = RNA(n+1) + diphosphate. Its function is as follows. DNA-dependent RNA polymerase catalyzes the transcription of DNA into RNA using the four ribonucleoside triphosphates as substrates. This chain is DNA-directed RNA polymerase subunit beta'', found in Stigeoclonium helveticum (Green alga).